A 214-amino-acid polypeptide reads, in one-letter code: Thiamine-phosphate synthase (214 aa).

Residues 37–41 (QYREK) and N73 contribute to the 4-amino-2-methyl-5-(diphosphooxymethyl)pyrimidine site. Mg(2+) is bound by residues D74 and D93. S112 contacts 4-amino-2-methyl-5-(diphosphooxymethyl)pyrimidine. Residue 139–141 (TIS) participates in 2-[(2R,5Z)-2-carboxy-4-methylthiazol-5(2H)-ylidene]ethyl phosphate binding. Residue K142 coordinates 4-amino-2-methyl-5-(diphosphooxymethyl)pyrimidine. 2-[(2R,5Z)-2-carboxy-4-methylthiazol-5(2H)-ylidene]ethyl phosphate contacts are provided by residues G171 and 191 to 192 (IS).

The protein belongs to the thiamine-phosphate synthase family. Requires Mg(2+) as cofactor.

The catalysed reaction is 2-[(2R,5Z)-2-carboxy-4-methylthiazol-5(2H)-ylidene]ethyl phosphate + 4-amino-2-methyl-5-(diphosphooxymethyl)pyrimidine + 2 H(+) = thiamine phosphate + CO2 + diphosphate. It catalyses the reaction 2-(2-carboxy-4-methylthiazol-5-yl)ethyl phosphate + 4-amino-2-methyl-5-(diphosphooxymethyl)pyrimidine + 2 H(+) = thiamine phosphate + CO2 + diphosphate. The enzyme catalyses 4-methyl-5-(2-phosphooxyethyl)-thiazole + 4-amino-2-methyl-5-(diphosphooxymethyl)pyrimidine + H(+) = thiamine phosphate + diphosphate. It participates in cofactor biosynthesis; thiamine diphosphate biosynthesis; thiamine phosphate from 4-amino-2-methyl-5-diphosphomethylpyrimidine and 4-methyl-5-(2-phosphoethyl)-thiazole: step 1/1. In terms of biological role, condenses 4-methyl-5-(beta-hydroxyethyl)thiazole monophosphate (THZ-P) and 2-methyl-4-amino-5-hydroxymethyl pyrimidine pyrophosphate (HMP-PP) to form thiamine monophosphate (TMP). The protein is Thiamine-phosphate synthase of Listeria innocua serovar 6a (strain ATCC BAA-680 / CLIP 11262).